A 183-amino-acid polypeptide reads, in one-letter code: Apo-citrate lyase phosphoribosyl-dephospho-CoA transferase (183 aa).

It belongs to the CitX family.

It catalyses the reaction apo-[citrate lyase ACP] + 2'-(5''-triphospho-alpha-D-ribosyl)-3'-dephospho-CoA = holo-[citrate lyase ACP] + diphosphate. Transfers 2-(5''-triphosphoribosyl)-3'-dephosphocoenzyme-A on a serine residue to the apo-acyl carrier protein (gamma chain) of the citrate lyase to yield holo-acyl carrier protein. The sequence is that of Apo-citrate lyase phosphoribosyl-dephospho-CoA transferase from Escherichia coli O9:H4 (strain HS).